A 307-amino-acid polypeptide reads, in one-letter code: Ribosomal RNA small subunit methyltransferase H (307 aa).

S-adenosyl-L-methionine is bound by residues 33 to 35, Asp52, Leu83, Asp97, and Gln104; that span reads GGH.

It belongs to the methyltransferase superfamily. RsmH family.

It localises to the cytoplasm. It carries out the reaction cytidine(1402) in 16S rRNA + S-adenosyl-L-methionine = N(4)-methylcytidine(1402) in 16S rRNA + S-adenosyl-L-homocysteine + H(+). Functionally, specifically methylates the N4 position of cytidine in position 1402 (C1402) of 16S rRNA. The polypeptide is Ribosomal RNA small subunit methyltransferase H (Campylobacter fetus subsp. fetus (strain 82-40)).